Reading from the N-terminus, the 463-residue chain is Probable Xaa-Pro aminopeptidase PEPP (463 aa).

4 residues coordinate Mn(2+): Asp259, Asp270, Glu393, and Glu433.

It belongs to the peptidase M24B family. It depends on Mn(2+) as a cofactor.

It carries out the reaction Release of any N-terminal amino acid, including proline, that is linked to proline, even from a dipeptide or tripeptide.. In terms of biological role, catalyzes the removal of a penultimate prolyl residue from the N-termini of peptides. The sequence is that of Probable Xaa-Pro aminopeptidase PEPP (PEPP) from Phaeosphaeria nodorum (strain SN15 / ATCC MYA-4574 / FGSC 10173) (Glume blotch fungus).